A 629-amino-acid chain; its full sequence is Ras GTPase-activating protein gap-1 (629 aa).

In terms of domain architecture, Ras-GAP spans 183-398; the sequence is DRIRPVLSSL…SVMASFLDNI (216 aa). Positions 411–507 constitute a PH domain; that stretch reads TVFKFGNLQQ…WLNAIERQRN (97 aa).

It is found in the cytoplasm. GTPase-activating protein, which inhibits the vulval induction by acting as a negative regulator for the member of the Ras family let-60. Probably decreases the signaling activity of Ras by stimulating its intrinsic GTPase activity, thereby lowering the levels of GTP-bound, active Ras. The polypeptide is Ras GTPase-activating protein gap-1 (gap-1) (Caenorhabditis elegans).